Reading from the N-terminus, the 220-residue chain is Flavin-dependent thymidylate synthase (220 aa).

In terms of domain architecture, ThyX spans 1–208; that stretch reads MKIDILDKGF…PWTFEAFLKY (208 aa). FAD contacts are provided by residues threonine 55, 78-80, and glutamate 86; that span reads RHR. Residues 75 to 78, 86 to 90, and arginine 147 contribute to the dUMP site; these read QWFR and ELSGR. Positions 78-88 match the ThyX motif motif; sequence RHRIASYNELS. FAD is bound by residues 163-165 and asparagine 169; that span reads NAR. Arginine 174 is a dUMP binding site. Catalysis depends on arginine 174, which acts as the Involved in ionization of N3 of dUMP, leading to its activation.

This sequence belongs to the thymidylate synthase ThyX family. As to quaternary structure, homotetramer. FAD is required as a cofactor.

The enzyme catalyses dUMP + (6R)-5,10-methylene-5,6,7,8-tetrahydrofolate + NADPH + H(+) = dTMP + (6S)-5,6,7,8-tetrahydrofolate + NADP(+). Its pathway is pyrimidine metabolism; dTTP biosynthesis. In terms of biological role, catalyzes the reductive methylation of 2'-deoxyuridine-5'-monophosphate (dUMP) to 2'-deoxythymidine-5'-monophosphate (dTMP) while utilizing 5,10-methylenetetrahydrofolate (mTHF) as the methyl donor, and NADPH and FADH(2) as the reductant. In Thermotoga petrophila (strain ATCC BAA-488 / DSM 13995 / JCM 10881 / RKU-1), this protein is Flavin-dependent thymidylate synthase.